Consider the following 238-residue polypeptide: Sugar fermentation stimulation protein homolog (238 aa).

This sequence belongs to the SfsA family.

This Vibrio vulnificus (strain CMCP6) protein is Sugar fermentation stimulation protein homolog.